Consider the following 591-residue polypeptide: Aspartate--tRNA(Asp/Asn) ligase (591 aa).

Glu-174 is an L-aspartate binding site. Residues 198–201 (QLFK) are aspartate. An L-aspartate-binding site is contributed by Arg-220. Residues 220–222 (RDE) and Gln-229 contribute to the ATP site. His-450 contributes to the L-aspartate binding site. ATP is bound at residue Glu-483. Arg-490 provides a ligand contact to L-aspartate. Residue 535–538 (GLDR) participates in ATP binding.

This sequence belongs to the class-II aminoacyl-tRNA synthetase family. Type 1 subfamily. In terms of assembly, homodimer.

The protein resides in the cytoplasm. It carries out the reaction tRNA(Asx) + L-aspartate + ATP = L-aspartyl-tRNA(Asx) + AMP + diphosphate. Its function is as follows. Aspartyl-tRNA synthetase with relaxed tRNA specificity since it is able to aspartylate not only its cognate tRNA(Asp) but also tRNA(Asn). Reaction proceeds in two steps: L-aspartate is first activated by ATP to form Asp-AMP and then transferred to the acceptor end of tRNA(Asp/Asn). In Pseudomonas syringae pv. syringae (strain B728a), this protein is Aspartate--tRNA(Asp/Asn) ligase.